A 363-amino-acid polypeptide reads, in one-letter code: tRNA dimethylallyltransferase (363 aa).

65–72 serves as a coordination point for ATP; sequence GPTASGKS. Residue 67-72 coordinates substrate; that stretch reads TASGKS. Interaction with substrate tRNA regions lie at residues 90 to 93 and 214 to 218; these read DSMQ and QRLIR.

Belongs to the IPP transferase family. Monomer. Requires Mg(2+) as cofactor.

It carries out the reaction adenosine(37) in tRNA + dimethylallyl diphosphate = N(6)-dimethylallyladenosine(37) in tRNA + diphosphate. Functionally, catalyzes the transfer of a dimethylallyl group onto the adenine at position 37 in tRNAs that read codons beginning with uridine, leading to the formation of N6-(dimethylallyl)adenosine (i(6)A). This is tRNA dimethylallyltransferase from Rickettsia rickettsii (strain Sheila Smith).